The primary structure comprises 181 residues: MEPEIKIVNVVVSTQIGTDIDLEYAADILDNAEYEPEQFPGLVCRLSEPKVALLIFRSGKLNCTGAKCKEDAVIAIHKIIKELKEAGMDLIDNPEVNVQNMVATTELGMEPNLDDISTLECTEYEPEQFPGLVYRLSDPKVVVLIFGSGKVVITGLKVIEDAYKAYDKISKTLKELEEELY.

Repeat copies occupy residues 7–83 (IVNV…IKEL) and 98–173 (VQNM…SKTL).

Belongs to the TBP family.

General factor that plays a role in the activation of archaeal genes transcribed by RNA polymerase. Binds specifically to the TATA box promoter element which lies close to the position of transcription initiation. The polypeptide is TATA-box-binding protein (Methanococcus maripaludis (strain C6 / ATCC BAA-1332)).